A 162-amino-acid chain; its full sequence is Endoribonuclease YbeY (162 aa).

Residues H127, H131, and H137 each coordinate Zn(2+).

This sequence belongs to the endoribonuclease YbeY family. It depends on Zn(2+) as a cofactor.

It localises to the cytoplasm. Its function is as follows. Single strand-specific metallo-endoribonuclease involved in late-stage 70S ribosome quality control and in maturation of the 3' terminus of the 16S rRNA. This chain is Endoribonuclease YbeY, found in Acetivibrio thermocellus (strain ATCC 27405 / DSM 1237 / JCM 9322 / NBRC 103400 / NCIMB 10682 / NRRL B-4536 / VPI 7372) (Clostridium thermocellum).